We begin with the raw amino-acid sequence, 461 residues long: Cysteine--tRNA ligase (461 aa).

Position 28 (Cys28) interacts with Zn(2+). Positions 30–40 (ITVYDLCHIGH) match the 'HIGH' region motif. Positions 209, 234, and 238 each coordinate Zn(2+). The short motif at 266 to 270 (KMSKS) is the 'KMSKS' region element. Lys269 contributes to the ATP binding site.

This sequence belongs to the class-I aminoacyl-tRNA synthetase family. In terms of assembly, monomer. Zn(2+) is required as a cofactor.

Its subcellular location is the cytoplasm. It carries out the reaction tRNA(Cys) + L-cysteine + ATP = L-cysteinyl-tRNA(Cys) + AMP + diphosphate. The protein is Cysteine--tRNA ligase of Salmonella arizonae (strain ATCC BAA-731 / CDC346-86 / RSK2980).